The chain runs to 251 residues: Intermembrane phospholipid transport system lipoprotein MlaA (251 aa).

The N-terminal stretch at 1 to 17 is a signal peptide; that stretch reads MKLRLSALALGTTLLVG. The N-palmitoyl cysteine moiety is linked to residue Cys-18. Cys-18 carries S-diacylglycerol cysteine lipidation. The segment at 228–251 is disordered; the sequence is GELKPQENPNAQAIQDDLKDIDSE.

This sequence belongs to the MlaA family.

It localises to the cell outer membrane. Its function is as follows. Involved in a phospholipid transport pathway that maintains lipid asymmetry in the outer membrane by retrograde trafficking of phospholipids from the outer membrane to the inner membrane. Required for intercellular spreading of S.flexneri. The chain is Intermembrane phospholipid transport system lipoprotein MlaA from Shigella flexneri.